Here is a 551-residue protein sequence, read N- to C-terminus: Malate synthase, glyoxysomal (551 aa).

Arg-174 serves as the catalytic Proton acceptor. Residue Asp-458 is the Proton donor of the active site.

This sequence belongs to the malate synthase family.

The protein localises to the glyoxysome. It catalyses the reaction glyoxylate + acetyl-CoA + H2O = (S)-malate + CoA + H(+). The protein operates within carbohydrate metabolism; glyoxylate cycle; (S)-malate from isocitrate: step 2/2. The sequence is that of Malate synthase, glyoxysomal (PMS1) from Candida tropicalis (Yeast).